The following is a 392-amino-acid chain: Formate-dependent phosphoribosylglycinamide formyltransferase (392 aa).

N(1)-(5-phospho-beta-D-ribosyl)glycinamide contacts are provided by residues 22-23 (EL) and Glu-82. ATP is bound by residues Arg-114, Lys-155, 160–165 (SSGKGQ), 195–198 (EGVV), and Glu-203. An ATP-grasp domain is found at 119–308 (RLAAEELQLP…EFALHVRAFL (190 aa)). Mg(2+) is bound by residues Glu-267 and Glu-279. N(1)-(5-phospho-beta-D-ribosyl)glycinamide-binding positions include Asp-286, Lys-355, and 362-363 (RR).

It belongs to the PurK/PurT family. In terms of assembly, homodimer.

The enzyme catalyses N(1)-(5-phospho-beta-D-ribosyl)glycinamide + formate + ATP = N(2)-formyl-N(1)-(5-phospho-beta-D-ribosyl)glycinamide + ADP + phosphate + H(+). Its pathway is purine metabolism; IMP biosynthesis via de novo pathway; N(2)-formyl-N(1)-(5-phospho-D-ribosyl)glycinamide from N(1)-(5-phospho-D-ribosyl)glycinamide (formate route): step 1/1. Functionally, involved in the de novo purine biosynthesis. Catalyzes the transfer of formate to 5-phospho-ribosyl-glycinamide (GAR), producing 5-phospho-ribosyl-N-formylglycinamide (FGAR). Formate is provided by PurU via hydrolysis of 10-formyl-tetrahydrofolate. This chain is Formate-dependent phosphoribosylglycinamide formyltransferase, found in Shigella boydii serotype 4 (strain Sb227).